The following is a 244-amino-acid chain: 3-deoxy-manno-octulosonate cytidylyltransferase (244 aa).

The protein belongs to the KdsB family.

It localises to the cytoplasm. The catalysed reaction is 3-deoxy-alpha-D-manno-oct-2-ulosonate + CTP = CMP-3-deoxy-beta-D-manno-octulosonate + diphosphate. The protein operates within nucleotide-sugar biosynthesis; CMP-3-deoxy-D-manno-octulosonate biosynthesis; CMP-3-deoxy-D-manno-octulosonate from 3-deoxy-D-manno-octulosonate and CTP: step 1/1. It functions in the pathway bacterial outer membrane biogenesis; lipopolysaccharide biosynthesis. In terms of biological role, activates KDO (a required 8-carbon sugar) for incorporation into bacterial lipopolysaccharide in Gram-negative bacteria. The protein is 3-deoxy-manno-octulosonate cytidylyltransferase of Rickettsia canadensis (strain McKiel).